Reading from the N-terminus, the 300-residue chain is uncharacterized protein (300 aa).

Residues 10–67 (FDLNLLVIFECIYQHLSISKAAESLYITPSAVSQSLQRLRAQFNDPLFIRSGKGIAPT) enclose the HTH lysR-type domain. A DNA-binding region (H-T-H motif) is located at residues 27–46 (ISKAAESLYITPSAVSQSLQ).

This sequence belongs to the LysR transcriptional regulatory family.

This is an uncharacterized protein from Escherichia coli (strain K12).